The primary structure comprises 635 residues: Sodium- and chloride-dependent creatine transporter 1 (635 aa).

The segment at 1-27 (MAKKSAENGIYSVSGDEKKGPLIVSGP) is disordered. The Cytoplasmic portion of the chain corresponds to 1–60 (MAKKSAENGIYSVSGDEKKGPLIVSGPDGAPAKGDGPAGLGAPGGRLAVPPRETWTRQMD). Residues 61-81 (FIMSCVGFAVGLGNVWRFPYL) traverse the membrane as a helical segment. Over 82-87 (CYKNGG) the chain is Extracellular. A helical membrane pass occupies residues 88-108 (GVFLIPYVLIALVGGIPIFFL). The Cytoplasmic portion of the chain corresponds to 109 to 138 (EISLGQFMKAGSINVWNICPLFKGLGYASM). Residues 139-159 (VIVFYCNTYYIMVLAWGFYYL) form a helical membrane-spanning segment. The Extracellular segment spans residues 160–230 (VKSFTTTLPW…LSTGLEVPGA (71 aa)). Residues N192 and N197 are each glycosylated (N-linked (GlcNAc...) asparagine). The helical transmembrane segment at 231–251 (LNWEVTLCLLACWVLVYFCVW) threads the bilayer. The Cytoplasmic portion of the chain corresponds to 252-269 (KGVKSTGKIVYFTATFPY). A helical transmembrane segment spans residues 270–290 (VVLVVLLVRGVLLPGALDGII). Topologically, residues 291–304 (YYLKPDWSKLGSPQ) are extracellular. The helical transmembrane segment at 305–325 (VWIDAGTQIFFSYAIGLGALT) threads the bilayer. Over 326 to 341 (ALGSYNRFNNNCYKDA) the chain is Cytoplasmic. Residues 342 to 362 (IILALINSGTSFFAGFVVFSI) form a helical membrane-spanning segment. The Extracellular segment spans residues 363–394 (LGFMATEQGVHISKVAESGPGLAFIAYPRAVT). Residues 395 to 415 (LMPVAPLWAALFFFMLLLLGL) traverse the membrane as a helical segment. The Cytoplasmic segment spans residues 416-444 (DSQFVGVEGFITGLLDLLPASYYFRFQRE). Residues 445 to 465 (ISVALCCALCFVIDLSMVTDG) traverse the membrane as a helical segment. At 466-479 (GMYVFQLFDYYSAS) the chain is on the extracellular side. The chain crosses the membrane as a helical span at residues 480-500 (GTTLLWQAFWECVVVAWVYGA). Topologically, residues 501 to 520 (DRFMDDIACMIGYRPCPWMK) are cytoplasmic. The chain crosses the membrane as a helical span at residues 521-541 (WCWSFFTPLVCMGIFIFNIVY). The Extracellular portion of the chain corresponds to 542-560 (YEPLVYNNTYVYPWWGEAM). N548 carries N-linked (GlcNAc...) asparagine glycosylation. The chain crosses the membrane as a helical span at residues 561–581 (GWAFALSSMLCVPLHLLGCLL). Topologically, residues 582–635 (RAKGTMAERWQHLTQPIWGLHHLEYRAQDADVRGLTTLTPVSESSKVVVVESVM) are cytoplasmic. A phosphothreonine mark is found at T617 and T620. At S623 the chain carries Phosphoserine.

It belongs to the sodium:neurotransmitter symporter (SNF) (TC 2.A.22) family. SLC6A8 subfamily. Post-translationally, glycosylated. In terms of tissue distribution, brain. Highly expressed in brain capillaries branching in all cortical layers and moderately expressed in neuronal perikarya (at protein level).

It localises to the cell membrane. Its subcellular location is the apical cell membrane. The catalysed reaction is creatine(out) + chloride(out) + 2 Na(+)(out) = creatine(in) + chloride(in) + 2 Na(+)(in). Its function is as follows. Creatine:sodium symporter which mediates the uptake of creatine. Plays an important role in supplying creatine to the brain via the blood-brain barrier. This chain is Sodium- and chloride-dependent creatine transporter 1 (Slc6a8), found in Mus musculus (Mouse).